A 146-amino-acid chain; its full sequence is uncharacterized protein (146 aa).

The span at 119-128 (AQADLEHEES) shows a compositional bias: basic and acidic residues. The segment at 119-146 (AQADLEHEESASIDQDEMVAIETRKTKK) is disordered.

This is an uncharacterized protein from Schizosaccharomyces pombe (strain 972 / ATCC 24843) (Fission yeast).